The primary structure comprises 159 residues: UPF0336 protein ML1910 (159 aa).

Belongs to the UPF0336 family.

In Mycobacterium leprae (strain TN), this protein is UPF0336 protein ML1910.